A 98-amino-acid chain; its full sequence is Large ribosomal subunit protein uL23 (98 aa).

The protein belongs to the universal ribosomal protein uL23 family. As to quaternary structure, part of the 50S ribosomal subunit. Contacts protein L29, and trigger factor when it is bound to the ribosome.

Functionally, one of the early assembly proteins it binds 23S rRNA. One of the proteins that surrounds the polypeptide exit tunnel on the outside of the ribosome. Forms the main docking site for trigger factor binding to the ribosome. This Clostridium acetobutylicum (strain ATCC 824 / DSM 792 / JCM 1419 / IAM 19013 / LMG 5710 / NBRC 13948 / NRRL B-527 / VKM B-1787 / 2291 / W) protein is Large ribosomal subunit protein uL23.